A 323-amino-acid chain; its full sequence is MKLHLKGLRIAFFGTSDFAAYHLFVLIHCSIHKIVAIFTQESIKIKQKSSILSIHTISQINNILLFQSYFLSQSQINHIIKNLNIDIIIVVSYGVILSQEILHIPKLGCINIHGSLLPRWRGPAPIQRALEHGDTMTGISIIQMNSNIDTGDILHSTPCKISPKDTSYTLSKKLACIGSIALLKTIEKIILGTCKNIPQDTSNITYAYKLNKKEAHINWNKSAIEIERRIRAFNPWPVSYFKIKNQYIRVWNAEINKNSINTDQYNDFQPGTILKTHPNGIYVITGSGIIILTVLQISGKKKIHVKDLMNAYSSLFTMHSVLT.

115 to 118 (SLLP) provides a ligand contact to (6S)-5,6,7,8-tetrahydrofolate.

Belongs to the Fmt family.

The catalysed reaction is L-methionyl-tRNA(fMet) + (6R)-10-formyltetrahydrofolate = N-formyl-L-methionyl-tRNA(fMet) + (6S)-5,6,7,8-tetrahydrofolate + H(+). Attaches a formyl group to the free amino group of methionyl-tRNA(fMet). The formyl group appears to play a dual role in the initiator identity of N-formylmethionyl-tRNA by promoting its recognition by IF2 and preventing the misappropriation of this tRNA by the elongation apparatus. In Blochmanniella floridana, this protein is Methionyl-tRNA formyltransferase.